We begin with the raw amino-acid sequence, 56 residues long: MAHENVWFSHPRNYGKGSRQCRVCASHSGLIRKYGLNICRQCFREKANDIGFHKYR.

Zn(2+) is bound by residues Cys21, Cys24, Cys39, and Cys42.

This sequence belongs to the universal ribosomal protein uS14 family. The cofactor is Zn(2+).

This chain is Small ribosomal subunit protein uS14 (RPS29), found in Eremothecium gossypii (strain ATCC 10895 / CBS 109.51 / FGSC 9923 / NRRL Y-1056) (Yeast).